A 1733-amino-acid chain; its full sequence is Gag-Pol polyprotein (1733 aa).

Residue Gly2 is the site of N-myristoyl glycine; by host attachment. Residues 109–112 (PSAP) carry the PTAP/PSAP motif motif. Residues 112-121 (PSLLPEPPLS) are compositionally biased toward pro residues. Disordered regions lie at residues 112–196 (PSLL…ASRL) and 202–221 (LPVADSTTSQAFPLRSGGNG). Residues 128–132 (LYPAL) carry the LYPX(n)L motif motif. Positions 159–170 (DPPPYRDPGPPP) are enriched in pro residues. The PPXY motif signature appears at 160 to 163 (PPPY). The residue at position 190 (Ser190) is a Phosphoserine; by host. Residues 343-391 (GRSPTNLAKVKGITQGPNESPSAFLERLKEAYRRYTPYDPEDPGQETNV) are interaction with host PIAS4. The interaction with host UBE2I stretch occupies residues 428 to 433 (IFNKRE). 2 stretches are compositionally biased toward basic and acidic residues: residues 432–464 (RETPEEREERIKRETEEKEERRRAEDEQKEKER) and 484–496 (KQDRQGGERRRPQ). 2 disordered regions span residues 432-496 (RETP…RRPQ) and 511-550 (WAKDCPKKPRGPRGPRPQTSLLALDDQGGRGQEPPPEPRI). Positions 436-476 (EEREERIKRETEEKEERRRAEDEQKEKERDRRRHREMSKLL) form a coiled coil. Residues 500–517 (DQCAYCKEKGHWAKDCPK) form a CCHC-type zinc finger. Residues 559 to 629 (VTFLVDTGAQ…CPYPLLGRDL (71 aa)) form the Peptidase A2 domain. Catalysis depends on Asp564, which acts as the Protease; shared with dimeric partner. The Reverse transcriptase domain occupies 739–930 (LDQGILVPCQ…KQVKYLGYLL (192 aa)). Asp807, Asp881, Asp882, Asp1181, Glu1219, Asp1240, and Asp1310 together coordinate Mg(2+). Residues 1172-1318 (PDADHTWYTD…ADQAAREVAT (147 aa)) form the RNase H type-1 domain. An HHCC-type zinc finger spans residues 1385–1425 (HQLTHLSFSKTKALLERSPSPYYMLNRDRTLKNITETCKAC). The region spanning 1442–1600 (RGHRPGTHWE…TPYEILYGAP (159 aa)) is the Integrase catalytic domain. Positions 1453 and 1512 each coordinate Mg(2+).

Homohexamer; further associates as homomultimer. The virus core is composed of a lattice formed from hexagonal rings, each containing six capsid monomers. Interacts with mouse UBE2I and mouse PIAS4. In terms of assembly, interacts (via PPXY motif) with host NEDD4. Interacts (via PSAP motif) with host TSG101. Interacts (via LYPX(n)L motif) with host PDCD6IP. As to quaternary structure, the reverse transcriptase is a monomer (Potential). Interacts (via RNase domains) with host release factor ETF1; this interaction is essential for translational readthrough of amber codon between viral gag and pol genes, as well as for viral replication. Homodimer. Requires Mg(2+) as cofactor. Ubiquitinated by ITCH. Gag can recruit the ubiquitin ligase Itch in an L domain-independent manner to facilitate virus release via a mechanism that involves Gag ubiquitination. In terms of processing, specific enzymatic cleavages by the viral protease yield mature proteins. The protease is released by autocatalytic cleavage. The polyprotein is cleaved during and after budding, this process is termed maturation. Post-translationally, sumoylated; which is required for virus replication. Phosphorylated on serine residues.

Its subcellular location is the virion. The protein localises to the host cell membrane. It localises to the host late endosome membrane. The protein resides in the host endosome. It is found in the host multivesicular body. Its subcellular location is the host cytoplasm. The catalysed reaction is DNA(n) + a 2'-deoxyribonucleoside 5'-triphosphate = DNA(n+1) + diphosphate. It catalyses the reaction Endonucleolytic cleavage to 5'-phosphomonoester.. Its activity is regulated as follows. Most efficiently inhibited by Amprenavir, which is able to block Gag-Pol processing in infected cells. Plays a role in budding and is processed by the viral protease during virion maturation outside the cell. During budding, it recruits, in a PPXY-dependent or independent manner, Nedd4-like ubiquitin ligases that conjugate ubiquitin molecules to Gag-Pol, or to Gag-Pol binding host factors. Interaction with HECT ubiquitin ligases probably links the viral protein to the host ESCRT pathway and facilitates release. Its function is as follows. Targets Gag and gag-pol polyproteins to the plasma membrane via a multipartite membrane binding signal, that includes its myristoylated N-terminus. Also mediates nuclear localization of the pre-integration complex. In terms of biological role, constituent of the pre-integration complex (PIC) which tethers the latter to mitotic chromosomes. This allows the integration of the viral genome into the host DNA. Functionally, forms the spherical core of the virion that encapsulates the genomic RNA-nucleocapsid complex. Involved in the packaging and encapsidation of two copies of the genome. Binds with high affinity to conserved UCUG elements within the packaging signal, located near the 5'-end of the genome. This binding is dependent on genome dimerization. Acts as a nucleic acid chaperone which is involved in rearrangement of nucleic acid secondary structures during gRNA retrotranscription. Its function is as follows. The aspartyl protease mediates proteolytic cleavages of Gag and Gag-Pol polyproteins during or shortly after the release of the virion from the plasma membrane. Cleavages take place as an ordered, step-wise cascade to yield mature proteins. This process is called maturation. Displays maximal activity during the budding process just prior to particle release from the cell (Potential). Cleaves the translation initiation factor eIF4G leading to the inhibition of host cap-dependent translation. In terms of biological role, RT is a multifunctional enzyme that converts the viral dimeric RNA genome into dsDNA in the cytoplasm, shortly after virus entry into the cell. This enzyme displays a DNA polymerase activity that can copy either DNA or RNA templates, and a ribonuclease H (RNase H) activity that cleaves the RNA strand of RNA-DNA heteroduplexes in a partially processive 3' to 5' endonucleasic mode. Conversion of viral genomic RNA into dsDNA requires many steps. A tRNA binds to the primer-binding site (PBS) situated at the 5' end of the viral RNA. RT uses the 3' end of the tRNA primer to perform a short round of RNA-dependent minus-strand DNA synthesis. The reading proceeds through the U5 region and ends after the repeated (R) region which is present at both ends of viral RNA. The portion of the RNA-DNA heteroduplex is digested by the RNase H, resulting in a ssDNA product attached to the tRNA primer. This ssDNA/tRNA hybridizes with the identical R region situated at the 3' end of viral RNA. This template exchange, known as minus-strand DNA strong stop transfer, can be either intra- or intermolecular. RT uses the 3' end of this newly synthesized short ssDNA to perform the RNA-dependent minus-strand DNA synthesis of the whole template. RNase H digests the RNA template except for a polypurine tract (PPT) situated at the 5' end of the genome. It is not clear if both polymerase and RNase H activities are simultaneous. RNase H probably can proceed both in a polymerase-dependent (RNA cut into small fragments by the same RT performing DNA synthesis) and a polymerase-independent mode (cleavage of remaining RNA fragments by free RTs). Secondly, RT performs DNA-directed plus-strand DNA synthesis using the PPT that has not been removed by RNase H as primers. PPT and tRNA primers are then removed by RNase H. The 3' and 5' ssDNA PBS regions hybridize to form a circular dsDNA intermediate. Strand displacement synthesis by RT to the PBS and PPT ends produces a blunt ended, linear dsDNA copy of the viral genome that includes long terminal repeats (LTRs) at both ends. Functionally, catalyzes viral DNA integration into the host chromosome, by performing a series of DNA cutting and joining reactions. This enzyme activity takes place after virion entry into a cell and reverse transcription of the RNA genome in dsDNA. The first step in the integration process is 3' processing. This step requires a complex comprising the viral genome, matrix protein and integrase. This complex is called the pre-integration complex (PIC). The integrase protein removes 2 nucleotides from each 3' end of the viral DNA, leaving recessed CA OH's at the 3' ends. In the second step that requires cell division, the PIC enters cell nucleus. In the third step, termed strand transfer, the integrase protein joins the previously processed 3' ends to the 5' ends of strands of target cellular DNA at the site of integration. The last step is viral DNA integration into host chromosome. The polypeptide is Gag-Pol polyprotein (gag-pol) (Cas-Br-E murine leukemia virus).